Here is a 486-residue protein sequence, read N- to C-terminus: Keratin, type II cuticular Hb6 (486 aa).

The segment at 1–106 is head; it reads MTCGSYCGGR…PNAQCVKHEE (106 aa). Residues 106 to 417 enclose the IF rod domain; sequence EKEQIKCLNS…RLLEGEEQRL (312 aa). The segment at 107–141 is coil 1A; that stretch reads KEQIKCLNSKFAAFIDKVRFLEQQNKLLETKWQFY. Residues 142-151 are linker 1; it reads QNRKCCESNM. Residues 152–252 form a coil 1B region; the sequence is EPLFEGYIEA…YDEETRILHS (101 aa). K212 is covalently cross-linked (Glycyl lysine isopeptide (Lys-Gly) (interchain with G-Cter in SUMO1)). The linker 12 stretch occupies residues 253–269; that stretch reads HISDTSIVVKMDNSRDL. The segment at 270 to 413 is coil 2; sequence NMDCVVAEIK…TTYRRLLEGE (144 aa). The tract at residues 414-486 is tail; sequence EQRLCEGVGS…GACSGGCKKC (73 aa).

Belongs to the intermediate filament family. As to quaternary structure, heterotetramer of two type I and two type II keratins.

The polypeptide is Keratin, type II cuticular Hb6 (Krt86) (Mus musculus (Mouse)).